The following is a 94-amino-acid chain: Large ribosomal subunit protein bL25 (94 aa).

Belongs to the bacterial ribosomal protein bL25 family. Part of the 50S ribosomal subunit; part of the 5S rRNA/L5/L18/L25 subcomplex. Contacts the 5S rRNA. Binds to the 5S rRNA independently of L5 and L18.

Functionally, this is one of the proteins that binds to the 5S RNA in the ribosome where it forms part of the central protuberance. The chain is Large ribosomal subunit protein bL25 from Enterobacter sp. (strain 638).